The chain runs to 504 residues: Crh-like protein CRH12 (504 aa).

A signal peptide spans 1–18; that stretch reads MYKQILTFLILFLRYILS. The GH16 domain maps to 19–270; the sequence is EFPDDPYEDD…YSKALTYSYG (252 aa). Asn34 carries N-linked (GlcNAc...) asparagine glycosylation. Cysteines 43 and 51 form a disulfide. The Nucleophile role is filled by Glu138. Glu143 acts as the Proton donor in catalysis. Glu143 lines the chitin pocket. Asn161 carries an N-linked (GlcNAc...) asparagine glycan. Chitin is bound by residues Lys221, Trp225, and Thr234. Residues 304–404 form a disordered region; it reads KPTPKQETDD…LDISTQLPPL (101 aa). Over residues 316–329 the composition is skewed to polar residues; that stretch reads VLTSSKSQRVATTI. Positions 356–378 are enriched in acidic residues; it reads WETEQDETGTDDTENSDNEEEES. 3 N-linked (GlcNAc...) asparagine glycosylation sites follow: Asn407, Asn416, and Asn425. Gly479 is lipidated: GPI-anchor amidated glycine. A propeptide spans 480-504 (removed in mature form); the sequence is VSSILATSFSSVVIAEILVIVVLLL.

Belongs to the glycosyl hydrolase 16 family. CRH1 subfamily. The GPI-anchor is attached to the protein in the endoplasmic reticulum and serves to target the protein to the cell surface. There, the glucosamine-inositol phospholipid moiety is cleaved off and the GPI-modified mannoprotein is covalently attached via its lipidless GPI glycan remnant to the 1,6-beta-glucan of the outer cell wall layer.

It is found in the secreted. The protein resides in the cell wall. The protein localises to the membrane. It catalyses the reaction Random endo-hydrolysis of N-acetyl-beta-D-glucosaminide (1-&gt;4)-beta-linkages in chitin and chitodextrins.. Dual chitinase/transglycosylase that plays a role in cell wall architecture. Chitinase and transglycosylase activities are coupled. Required for the polysaccharide cross-linking at the septa and the cell wall. More specifically, transfers chitin to 1,6-beta-glucan in the cell wall. Plays an important role in fungal pathogenesis via its functions in cell wall assembly and regeneration, filamentation, and adherence to host cells. This Candida albicans (strain SC5314 / ATCC MYA-2876) (Yeast) protein is Crh-like protein CRH12 (CRH12).